Here is a 29-residue protein sequence, read N- to C-terminus: Dermaseptin-J8 (29 aa).

Expressed by the skin glands.

The protein localises to the secreted. Functionally, has antimicrobial activity. This chain is Dermaseptin-J8, found in Phasmahyla jandaia (Jandaia leaf frog).